A 389-amino-acid polypeptide reads, in one-letter code: Large ribosomal subunit protein uL3 (389 aa).

The disordered stretch occupies residues methionine 1 to aspartate 36. Over residues proline 18–serine 31 the composition is skewed to basic residues.

The protein belongs to the universal ribosomal protein uL3 family.

It is found in the cytoplasm. The L3 protein is a component of the large subunit of cytoplasmic ribosomes. The sequence is that of Large ribosomal subunit protein uL3 (RPL3) from Oryza sativa subsp. japonica (Rice).